Reading from the N-terminus, the 314-residue chain is ATP synthase gamma chain (314 aa).

This sequence belongs to the ATPase gamma chain family. As to quaternary structure, F-type ATPases have 2 components, CF(1) - the catalytic core - and CF(0) - the membrane proton channel. CF(1) has five subunits: alpha(3), beta(3), gamma(1), delta(1), epsilon(1). CF(0) has three main subunits: a, b and c.

It is found in the cellular thylakoid membrane. Functionally, produces ATP from ADP in the presence of a proton gradient across the membrane. The gamma chain is believed to be important in regulating ATPase activity and the flow of protons through the CF(0) complex. The sequence is that of ATP synthase gamma chain from Rippkaea orientalis (strain PCC 8801 / RF-1) (Cyanothece sp. (strain PCC 8801)).